Reading from the N-terminus, the 193-residue chain is Cytochrome c biogenesis ATP-binding export protein CcmA (193 aa).

The region spanning 9-191 (LSASGLAILR…AAGFPVTAEV (183 aa)) is the ABC transporter domain. 41 to 48 (GANGAGKT) is a binding site for ATP.

This sequence belongs to the ABC transporter superfamily. CcmA exporter (TC 3.A.1.107) family. As to quaternary structure, the complex is composed of two ATP-binding proteins (CcmA) and two transmembrane proteins (CcmB).

The protein localises to the cell inner membrane. The enzyme catalyses heme b(in) + ATP + H2O = heme b(out) + ADP + phosphate + H(+). In terms of biological role, part of the ABC transporter complex CcmAB involved in the biogenesis of c-type cytochromes; once thought to export heme, this seems not to be the case, but its exact role is uncertain. Responsible for energy coupling to the transport system. The sequence is that of Cytochrome c biogenesis ATP-binding export protein CcmA from Hyphomonas neptunium (strain ATCC 15444).